The primary structure comprises 398 residues: Subtilisin-like protease CPC735_015300 (398 aa).

An N-terminal signal peptide occupies residues 1 to 19; sequence MGFIKTLSLSLAAASAANA. Positions 20–116 are excised as a propeptide; sequence AKILSPSRPD…IEHDHVVRLT (97 aa). Positions 35–115 constitute an Inhibitor I9 domain; that stretch reads QYIVVMKDGV…FIEHDHVVRL (81 aa). Residues 126–398 form the Peptidase S8 domain; the sequence is TWGLGRVSHQ…NKLTYNGNGQ (273 aa). Residues Asp158 and His189 each act as charge relay system in the active site. An N-linked (GlcNAc...) asparagine glycan is attached at Asn250. Catalysis depends on Ser344, which acts as the Charge relay system. Asn362 is a glycosylation site (N-linked (GlcNAc...) asparagine).

The protein belongs to the peptidase S8 family.

It localises to the secreted. Its function is as follows. Secreted subtilisin-like serine protease with keratinolytic activity that contributes to pathogenicity. In Coccidioides posadasii (strain C735) (Valley fever fungus), this protein is Subtilisin-like protease CPC735_015300.